The chain runs to 375 residues: GDP-mannose transporter GONST2 (375 aa).

9 consecutive transmembrane segments (helical) span residues 79–99, 112–132, 141–161, 165–185, 199–219, 262–282, 300–320, 327–347, and 349–369; these read LVSG…NKIV, MLYQ…SGVV, LIRV…SGMY, YINV…TGIG, WAAM…DLTF, MVLL…ILLG, VVAT…MWFL, TYSL…LVLF, and VPLS…GVVF.

It belongs to the nucleotide-sugar transporter family. GDP-Mannose:GMP antiporter (GMA) (TC 2.A.7.13) subfamily. In terms of tissue distribution, expressed in rosette leaves, stems, flowers and siliques.

The protein resides in the golgi apparatus membrane. Functionally, GDP-mannose transporter that may be involved in the import of GDP-mannose from the cytoplasm into the Golgi lumen. In Arabidopsis thaliana (Mouse-ear cress), this protein is GDP-mannose transporter GONST2.